The sequence spans 178 residues: Thioredoxin F1, chloroplastic (178 aa).

The interval 1 to 22 (MPLSLRLSPSPTALSPTTGGFG) is disordered. A chloroplast-targeting transit peptide spans 1 to 57 (MPLSLRLSPSPTALSPTTGGFGPSRKQCRIPYSGVPTTKIGFCSLDSRKRGDSSVVR). Over residues 7-18 (LSPSPTALSPTT) the composition is skewed to polar residues. Positions 58–174 (CSLETVNVSV…LVAAIETARS (117 aa)) constitute a Thioredoxin domain. Catalysis depends on nucleophile residues Cys99 and Cys102. An intrachain disulfide couples Cys99 to Cys102. Position 126 is an S-glutathionyl cysteine; transient (Cys126).

This sequence belongs to the thioredoxin family. Plant F-type subfamily. Glutathionylation at Cys-126 decreases its ability to be reduced by ferredoxin-thioredoxin reductase and reduces its efficiency in activating target chloroplastic enzymes.

The protein resides in the plastid. It localises to the chloroplast stroma. Functionally, thiol-disulfide oxidoreductase involved in the redox regulation of enzymes of both reductive pentose phosphate pathway (Calvin-Benson cycle) and oxidative pentose phosphate pathway. Under light or reducing conditions, activates in chloroplast the glyceraldehyde-3-phosphate dehydrogenase, the phosphoribulokinase and the fructose-1,6-bisphosphate phosphatase, and inhibits the glucose-6-phosphate dehydrogenase. In Arabidopsis thaliana (Mouse-ear cress), this protein is Thioredoxin F1, chloroplastic.